The chain runs to 80 residues: Conotoxin Cl11.2 (80 aa).

Positions 1-19 (MKMSVTFLLILMILPLFTG) are cleaved as a signal peptide. Positions 20–41 (EWQSGSRLSALKKRLLEKRLLQ) are excised as a propeptide. Disulfide bonds link Cys-45–Cys-59, Cys-52–Cys-63, Cys-58–Cys-68, and Cys-62–Cys-74.

This sequence belongs to the conotoxin I1 superfamily. In terms of tissue distribution, expressed by the venom duct.

The protein localises to the secreted. This is Conotoxin Cl11.2 from Californiconus californicus (California cone).